The sequence spans 112 residues: Protein preY, mitochondrial (112 aa).

A mitochondrion-targeting transit peptide spans 1-34 (MLSATCRRLAPALRRLRALSAVAGRFLQVPGARL). The TRM112 domain maps to 49–95 (HPALLQFLVCPLSKKPLRYEASTNELVNEELGIAYPIIDGIPNMIPQ).

Belongs to the PREY family. Interacts (via TRM112 domain) with NDUFAF5; the interaction is direct and stabilizes NDUFAF5 protein. Interacts with COQ5; the interaction is direct, stabilizes COQ5 protein and associates PYURF with COQ enzyme complex.

It localises to the mitochondrion. Its function is as follows. In mitochondria, S-adenosylmethionine-dependent methyltransferase chaperone that supports both coenzyme Q biosynthesis, by stabilizing its components, such as COQ5, and NADH:ubiquinone oxidoreductase complex (complex I, MT-ND1) assembly, by stabilizing complex I assembly factors, such as NDUFAF5. The polypeptide is Protein preY, mitochondrial (Pyurf) (Mus musculus (Mouse)).